A 432-amino-acid polypeptide reads, in one-letter code: 2-oxoglutarate-dependent dioxygenase AOP2 (432 aa).

Residues 281–378 (SGDDVEANDD…RYTAAIFTCP (98 aa)) enclose the Fe2OG dioxygenase domain. Residues H301, D303, and H358 each coordinate Fe cation. 2-oxoglutarate is bound at residue R369.

Belongs to the iron/ascorbate-dependent oxidoreductase family. Fe(2+) is required as a cofactor.

In terms of biological role, 2-oxoglutarate-dependent dioxygenase involved in glucosinolates biosynthesis. Catalyzes the conversion of methylsulfinylalkyl glucosinolates to alkenyl glucosinolates. In Arabidopsis thaliana (Mouse-ear cress), this protein is 2-oxoglutarate-dependent dioxygenase AOP2 (AOP2).